A 412-amino-acid chain; its full sequence is MIYAAEEVRARFARRGLSFDPTVEEIVRGILEAVREEGDEALDRFSRDLDGYPVEEVPKRAWREAYEDLDEDLRDALETARERIEAFYREEARGGFLRAEGGGVLAQLVRPLERVGVYVPGGSAPLLSTLLMTVVPAKVAGVREVIVASPPKVHPGVLAAAWVAGADRLFAMGGAQAIAALAYGTGRVPRVDKIVGPGNRYVVAAKRLVYGTVGIDGLAGPTETMIIADGSASPRLLAADLLAQAEHGPDSEPWLLSPDRALLERVEAELSRQLQDLPRAEVARQALEKGGLVLTKDLEEAFALANLYAPEHLSLALSDPLPWLEKVQNAGGVFLGEGSPEALGDYIAGPSHVMPTSGTARFQGGLAVRDFLKVIPVVGLSEGAARELAKKGALLARAEGLEGHARSLDLRR.

NAD(+) is bound by residues tyrosine 118, glutamine 176, and asparagine 199. Residues threonine 222, glutamine 244, and histidine 247 each contribute to the substrate site. 2 residues coordinate Zn(2+): glutamine 244 and histidine 247. Residues glutamate 311 and histidine 312 each act as proton acceptor in the active site. Substrate-binding residues include histidine 312, aspartate 345, glutamate 399, and histidine 404. Zn(2+) is bound at residue aspartate 345. Histidine 404 serves as a coordination point for Zn(2+).

It belongs to the histidinol dehydrogenase family. The cofactor is Zn(2+).

The catalysed reaction is L-histidinol + 2 NAD(+) + H2O = L-histidine + 2 NADH + 3 H(+). Its pathway is amino-acid biosynthesis; L-histidine biosynthesis; L-histidine from 5-phospho-alpha-D-ribose 1-diphosphate: step 9/9. Its function is as follows. Catalyzes the sequential NAD-dependent oxidations of L-histidinol to L-histidinaldehyde and then to L-histidine. The sequence is that of Histidinol dehydrogenase from Thermus thermophilus (strain ATCC BAA-163 / DSM 7039 / HB27).